The following is a 103-amino-acid chain: Small ribosomal subunit protein uS10 (103 aa).

It belongs to the universal ribosomal protein uS10 family. Part of the 30S ribosomal subunit.

Functionally, involved in the binding of tRNA to the ribosomes. This chain is Small ribosomal subunit protein uS10, found in Methylibium petroleiphilum (strain ATCC BAA-1232 / LMG 22953 / PM1).